We begin with the raw amino-acid sequence, 759 residues long: DNA replication licensing factor mcm-5 (759 aa).

Positions 330–536 constitute an MCM domain; it reads AYELIAKSIA…KDATLAKHVI (207 aa). An ADP-binding site is contributed by R370. An Arginine finger motif is present at residues 511–514; it reads SRFD.

It belongs to the MCM family. As to quaternary structure, component of the mcm2-7 complex. The complex forms a toroidal hexameric ring with the proposed subunit order mcm2-mcm6-mcm4-mcm7-mcm3-mcm5 (By simililarity).

It localises to the nucleus. The protein localises to the cytoplasm. The protein resides in the cytosol. It catalyses the reaction ATP + H2O = ADP + phosphate + H(+). Functionally, acts as a component of the MCM2-7 complex (MCM complex) which is the replicative helicase essential for 'once per cell cycle' DNA replication initiation and elongation in eukaryotic cells. Core component of CDC45-MCM-GINS (CMG) helicase, the molecular machine that unwinds template DNA during replication, and around which the replisome is built. The active ATPase sites in the MCM2-7 ring are formed through the interaction surfaces of two neighboring subunits such that a critical structure of a conserved arginine finger motif is provided in trans relative to the ATP-binding site of the Walker A box of the adjacent subunit. The six ATPase active sites, however, are likely to contribute differentially to the complex helicase activity. In Caenorhabditis elegans, this protein is DNA replication licensing factor mcm-5 (mcm-5).